We begin with the raw amino-acid sequence, 429 residues long: Histidinol dehydrogenase (429 aa).

Residues Y130, Q191, and N214 each contribute to the NAD(+) site. S237, Q259, and H262 together coordinate substrate. Positions 259 and 262 each coordinate Zn(2+). Residues E327 and H328 each act as proton acceptor in the active site. Substrate contacts are provided by H328, D361, E415, and H420. Residue D361 coordinates Zn(2+). H420 serves as a coordination point for Zn(2+).

The protein belongs to the histidinol dehydrogenase family. Zn(2+) is required as a cofactor.

It catalyses the reaction L-histidinol + 2 NAD(+) + H2O = L-histidine + 2 NADH + 3 H(+). The protein operates within amino-acid biosynthesis; L-histidine biosynthesis; L-histidine from 5-phospho-alpha-D-ribose 1-diphosphate: step 9/9. Its function is as follows. Catalyzes the sequential NAD-dependent oxidations of L-histidinol to L-histidinaldehyde and then to L-histidine. This chain is Histidinol dehydrogenase, found in Neisseria meningitidis serogroup B (strain ATCC BAA-335 / MC58).